A 486-amino-acid chain; its full sequence is Nuclear distribution protein PAC1 (486 aa).

A coiled-coil region spans residues 66 to 99 (STVLRLQKKIIDLENEISNLNNIINSTNSDNNGI). WD repeat units follow at residues 119–158 (QCEN…NTIP), 164–205 (AHTR…RTLN), 206–246 (GHEH…SLKS), 249–291 (GHSE…GVAM), 294–328 (GHSH…FPTI), 329–368 (PLEL…IAPH), 389–428 (GHSS…ETGY), and 437–483 (GHDG…NSIK).

The protein belongs to the WD repeat LIS1/nudF family. Self-associates. Interacts with NDL1 and dynein.

Its subcellular location is the cytoplasm. The protein localises to the cytoskeleton. The protein resides in the spindle pole. In terms of biological role, positively regulates the activity of the minus-end directed microtubule motor protein dynein. Plays a central role in positioning the mitotic spindle at the bud neck during cell division. Targets cytoplasmic dynein to microtubule plus ends, thereby promoting dynein-mediated microtubule sliding along the bud cortex and consequently the movement of the mitotic spindle to the bud neck. This chain is Nuclear distribution protein PAC1, found in Candida albicans (strain SC5314 / ATCC MYA-2876) (Yeast).